The following is a 496-amino-acid chain: Lysine--tRNA ligase (496 aa).

Mg(2+) is bound by residues E409 and E416.

It belongs to the class-II aminoacyl-tRNA synthetase family. In terms of assembly, homodimer. Mg(2+) serves as cofactor.

The protein localises to the cytoplasm. It catalyses the reaction tRNA(Lys) + L-lysine + ATP = L-lysyl-tRNA(Lys) + AMP + diphosphate. This chain is Lysine--tRNA ligase, found in Streptococcus agalactiae serotype III (strain NEM316).